The chain runs to 110 residues: Small ribosomal subunit protein uS17 (110 aa).

It belongs to the universal ribosomal protein uS17 family. As to quaternary structure, part of the 30S ribosomal subunit.

Functionally, one of the primary rRNA binding proteins, it binds specifically to the 5'-end of 16S ribosomal RNA. The protein is Small ribosomal subunit protein uS17 of Haloquadratum walsbyi (strain DSM 16790 / HBSQ001).